A 301-amino-acid polypeptide reads, in one-letter code: GTP cyclohydrolase FolE2 (301 aa).

It belongs to the GTP cyclohydrolase IV family.

The enzyme catalyses GTP + H2O = 7,8-dihydroneopterin 3'-triphosphate + formate + H(+). It functions in the pathway cofactor biosynthesis; 7,8-dihydroneopterin triphosphate biosynthesis; 7,8-dihydroneopterin triphosphate from GTP: step 1/1. Its function is as follows. Converts GTP to 7,8-dihydroneopterin triphosphate. The sequence is that of GTP cyclohydrolase FolE2 from Pseudomonas savastanoi pv. phaseolicola (strain 1448A / Race 6) (Pseudomonas syringae pv. phaseolicola (strain 1448A / Race 6)).